Here is a 423-residue protein sequence, read N- to C-terminus: Serine--tRNA ligase (423 aa).

231–233 (TAE) contacts L-serine. 262–264 (RSE) is a binding site for ATP. Glu-285 is a binding site for L-serine. Position 349 to 352 (349 to 352 (EIGS)) interacts with ATP. Residue Ser-385 participates in L-serine binding.

This sequence belongs to the class-II aminoacyl-tRNA synthetase family. Type-1 seryl-tRNA synthetase subfamily. As to quaternary structure, homodimer. The tRNA molecule binds across the dimer.

Its subcellular location is the cytoplasm. The enzyme catalyses tRNA(Ser) + L-serine + ATP = L-seryl-tRNA(Ser) + AMP + diphosphate + H(+). The catalysed reaction is tRNA(Sec) + L-serine + ATP = L-seryl-tRNA(Sec) + AMP + diphosphate + H(+). It functions in the pathway aminoacyl-tRNA biosynthesis; selenocysteinyl-tRNA(Sec) biosynthesis; L-seryl-tRNA(Sec) from L-serine and tRNA(Sec): step 1/1. In terms of biological role, catalyzes the attachment of serine to tRNA(Ser). Is also able to aminoacylate tRNA(Sec) with serine, to form the misacylated tRNA L-seryl-tRNA(Sec), which will be further converted into selenocysteinyl-tRNA(Sec). The protein is Serine--tRNA ligase of Acholeplasma laidlawii (strain PG-8A).